Reading from the N-terminus, the 386-residue chain is Probable pectin lyase F (386 aa).

The first 16 residues, methionine 1–alanine 16, serve as a signal peptide directing secretion. A disulfide bond links cysteine 77 and cysteine 101. Residue asparagine 124 is glycosylated (N-linked (GlcNAc...) asparagine). Arginine 251 is an active-site residue. Cysteine 326 and cysteine 334 are disulfide-bonded.

It belongs to the polysaccharide lyase 1 family.

Its subcellular location is the secreted. It catalyses the reaction Eliminative cleavage of (1-&gt;4)-alpha-D-galacturonan methyl ester to give oligosaccharides with 4-deoxy-6-O-methyl-alpha-D-galact-4-enuronosyl groups at their non-reducing ends.. Functionally, pectinolytic enzymes consist of four classes of enzymes: pectin lyase, polygalacturonase, pectin methylesterase and rhamnogalacturonase. Among pectinolytic enzymes, pectin lyase is the most important in depolymerization of pectin, since it cleaves internal glycosidic bonds of highly methylated pectins. The chain is Probable pectin lyase F (pelF) from Neosartorya fischeri (strain ATCC 1020 / DSM 3700 / CBS 544.65 / FGSC A1164 / JCM 1740 / NRRL 181 / WB 181) (Aspergillus fischerianus).